The primary structure comprises 298 residues: Transcription factor RAX2 (298 aa).

HTH myb-type domains follow at residues 9–62 (KANV…LNYL) and 63–117 (RPNI…KKKL). DNA-binding regions (H-T-H motif) lie at residues 38-62 (WIAL…LNYL) and 90-113 (WSVI…NTKL).

Ubiquitous, with higher levels in roots, flowers, and shoot tips. Found in all cells of the shoot tips.

Its subcellular location is the nucleus. Functionally, transcription activator. Positively regulates axillary meristems (AMs) formation and development, especially during inflorescence. In Arabidopsis thaliana (Mouse-ear cress), this protein is Transcription factor RAX2 (RAX2).